Reading from the N-terminus, the 170-residue chain is MPKPTKGPRLGGSSSHQKALLTNLAASLFEHGRIKTTEPKARALRPYAEKLITHAKKGTLHNRREVLKKLPDKDVVHALFAEIGPFFSDRDGGYTRIIKVEARKGDNAPMAVIELVREKTVTSEADRARRVAAASAKAAQAQEKPAQEEEVEATSDEVAYTSEPDKAAEH.

Over residues 134–144 (ASAKAAQAQEK) the composition is skewed to low complexity. Residues 134–170 (ASAKAAQAQEKPAQEEEVEATSDEVAYTSEPDKAAEH) are disordered.

Belongs to the bacterial ribosomal protein bL17 family. In terms of assembly, part of the 50S ribosomal subunit. Contacts protein L32.

The sequence is that of Large ribosomal subunit protein bL17 from Mycobacterium leprae (strain Br4923).